A 58-amino-acid polypeptide reads, in one-letter code: Small ribosomal subunit protein bS21 (58 aa).

The protein belongs to the bacterial ribosomal protein bS21 family.

The chain is Small ribosomal subunit protein bS21 from Prochlorococcus marinus (strain MIT 9515).